The primary structure comprises 79 residues: Short neurotoxin 3 (79 aa).

The signal sequence occupies residues 1 to 23 (MKTLLLTLVVMTIVCLDLGYTLT). 4 cysteine pairs are disulfide-bonded: Cys-24–Cys-41, Cys-34–Cys-59, Cys-63–Cys-71, and Cys-72–Cys-77.

Belongs to the three-finger toxin family. Short-chain subfamily. As to expression, expressed by the venom gland.

It localises to the secreted. The chain is Short neurotoxin 3 from Oxyuranus scutellatus scutellatus (Australian taipan).